Consider the following 120-residue polypeptide: Large ribosomal subunit protein uL18 (120 aa).

The tract at residues 1–26 is disordered; the sequence is MSKAKVTNARRKRSVRLKLRRSGGGR. Residues 8 to 23 are compositionally biased toward basic residues; that stretch reads NARRKRSVRLKLRRSG.

Belongs to the universal ribosomal protein uL18 family. Part of the 50S ribosomal subunit; part of the 5S rRNA/L5/L18/L25 subcomplex. Contacts the 5S and 23S rRNAs.

In terms of biological role, this is one of the proteins that bind and probably mediate the attachment of the 5S RNA into the large ribosomal subunit, where it forms part of the central protuberance. In Bradyrhizobium diazoefficiens (strain JCM 10833 / BCRC 13528 / IAM 13628 / NBRC 14792 / USDA 110), this protein is Large ribosomal subunit protein uL18.